Reading from the N-terminus, the 288-residue chain is HTH-type transcriptional regulator CzcR (288 aa).

An HTH lysR-type domain is found at Met1–Thr58. Residues Val18–Lys37 constitute a DNA-binding region (H-T-H motif).

Belongs to the LysR transcriptional regulatory family.

The protein is HTH-type transcriptional regulator CzcR (czcR) of Bacillus cereus (strain ATCC 10987 / NRS 248).